The primary structure comprises 100 residues: Urease subunit gamma (100 aa).

Belongs to the urease gamma subunit family. In terms of assembly, heterotrimer of UreA (gamma), UreB (beta) and UreC (alpha) subunits. Three heterotrimers associate to form the active enzyme.

The protein resides in the cytoplasm. It carries out the reaction urea + 2 H2O + H(+) = hydrogencarbonate + 2 NH4(+). The protein operates within nitrogen metabolism; urea degradation; CO(2) and NH(3) from urea (urease route): step 1/1. This Magnetococcus marinus (strain ATCC BAA-1437 / JCM 17883 / MC-1) protein is Urease subunit gamma.